The following is a 391-amino-acid chain: Serpin-ZX (391 aa).

The segment at 337–361 is RCL; sequence GTEAAAASAGVIKLRGLLMEEDEID. An N-linked (GlcNAc...) asparagine glycan is attached at Asn375.

It belongs to the serpin family. As to quaternary structure, interacts with RD21A. As to expression, expressed in root tips. Expressed in siliques (at protein level).

Its subcellular location is the secreted. It localises to the extracellular space. The protein resides in the apoplast. The protein localises to the cytoplasm. Functionally, inhibits metacaspase-9 (MC9) cysteine protease. Functions through cleavage of its reactive center loop and covalent binding to MC9. Involved in the control of elicitor-stimulated programmed cell death (PCD). During infection by the necrotrophic fungal pathogen Botrytis cinerea, functions to protect cells by limiting the PCD-promoting protease RD21A activity that is released from the ER body or vacuole to the cytoplasm. Involved in the control of water stress-induced cell death by limiting the pro-death protease RD21A activity that is released from the vacuole to the cytoplasm. This is Serpin-ZX from Arabidopsis thaliana (Mouse-ear cress).